We begin with the raw amino-acid sequence, 223 residues long: Small ribosomal subunit protein uS5 (223 aa).

Residues 1 to 48 (MPGRQRRDGGSGPAGQNGPNSGDNSNARGDNRGGGRDRRDGGRGGNAA) form a disordered region. Basic and acidic residues predominate over residues 29-42 (GDNRGGGRDRRDGG). The 64-residue stretch at 53 to 116 (FIERVVTINR…EEARKSFFRV (64 aa)) folds into the S5 DRBM domain.

It belongs to the universal ribosomal protein uS5 family. As to quaternary structure, part of the 30S ribosomal subunit. Contacts proteins S4 and S8.

In terms of biological role, with S4 and S12 plays an important role in translational accuracy. Functionally, located at the back of the 30S subunit body where it stabilizes the conformation of the head with respect to the body. The chain is Small ribosomal subunit protein uS5 from Rhodococcus erythropolis (strain PR4 / NBRC 100887).